We begin with the raw amino-acid sequence, 325 residues long: Biotin synthase (325 aa).

The Radical SAM core domain occupies 49–278 (FNGNIVDLCS…KASIRLAGGR (230 aa)). [4Fe-4S] cluster-binding residues include C67, C71, and C74. [2Fe-2S] cluster is bound by residues S111, C143, C203, and R273.

Belongs to the radical SAM superfamily. Biotin synthase family. Homodimer. Requires [4Fe-4S] cluster as cofactor. It depends on [2Fe-2S] cluster as a cofactor.

The enzyme catalyses (4R,5S)-dethiobiotin + (sulfur carrier)-SH + 2 reduced [2Fe-2S]-[ferredoxin] + 2 S-adenosyl-L-methionine = (sulfur carrier)-H + biotin + 2 5'-deoxyadenosine + 2 L-methionine + 2 oxidized [2Fe-2S]-[ferredoxin]. The protein operates within cofactor biosynthesis; biotin biosynthesis; biotin from 7,8-diaminononanoate: step 2/2. In terms of biological role, catalyzes the conversion of dethiobiotin (DTB) to biotin by the insertion of a sulfur atom into dethiobiotin via a radical-based mechanism. This is Biotin synthase from Clostridium tetani (strain Massachusetts / E88).